Reading from the N-terminus, the 104-residue chain is Large ribosomal subunit protein uL24 (104 aa).

It belongs to the universal ribosomal protein uL24 family. In terms of assembly, part of the 50S ribosomal subunit.

One of two assembly initiator proteins, it binds directly to the 5'-end of the 23S rRNA, where it nucleates assembly of the 50S subunit. In terms of biological role, one of the proteins that surrounds the polypeptide exit tunnel on the outside of the subunit. This is Large ribosomal subunit protein uL24 from Chromobacterium violaceum (strain ATCC 12472 / DSM 30191 / JCM 1249 / CCUG 213 / NBRC 12614 / NCIMB 9131 / NCTC 9757 / MK).